The chain runs to 676 residues: Pre-mRNA-splicing factor CLF1 (676 aa).

HAT repeat units lie at residues 46-78, 80-112, 114-146, 148-179, 181-212, 215-255, 257-291, 301-333, 336-369, 379-415, 417-449, 451-483, 485-519, 521-553, 576-614, and 620-652; these read EYQG…WELE, REFA…CELK, KNIN…TEET, GNIA…MEKR, REFD…FEME, NRDT…FETR, REYE…FEKQ, VVLT…LGQE, LEAD…LWIK, KEVE…FEIR, GNLP…LEAK, REFD…LEQM, GDEE…FEAE, ENYD…FEVT, EAKA…FEEE, and SKAD…YVFP. A compositionally biased stretch (basic and acidic residues) spans 616–628; that stretch reads GDDKSKADLDKRK. Residues 616 to 636 are disordered; that stretch reads GDDKSKADLDKRKPTPVKKKR.

It belongs to the crooked-neck family. In terms of assembly, associated with the spliceosome.

It localises to the nucleus. Its function is as follows. Involved in pre-mRNA splicing and cell cycle progression. Required for the spliceosome assembly and initiation of the DNA replication. This Yarrowia lipolytica (strain CLIB 122 / E 150) (Yeast) protein is Pre-mRNA-splicing factor CLF1 (CLF1).